Reading from the N-terminus, the 417-residue chain is Probable glucuronosyltransferase GUT1 (417 aa).

The Cytoplasmic portion of the chain corresponds to 1 to 15; the sequence is MGTRRRSARARARPP. Residues 16–36 traverse the membrane as a helical; Signal-anchor for type II membrane protein segment; it reads LAMPLAVLLLFACSSGVAAAA. Residues 37–417 are Lumenal-facing; it reads AQGIERIKDD…EGTREDLKPW (381 aa). Asparagine 144 and asparagine 405 each carry an N-linked (GlcNAc...) asparagine glycan.

It belongs to the glycosyltransferase 47 family.

It localises to the golgi apparatus membrane. Involved in the synthesis of glucuronoxylan hemicellulose in secondary cell walls. This Oryza sativa subsp. japonica (Rice) protein is Probable glucuronosyltransferase GUT1 (GUT1).